A 359-amino-acid chain; its full sequence is Membrane-bound lytic murein transglycosylase C (359 aa).

The signal sequence occupies residues 1-16 (MKKYLALALIAPLLIS). A lipid anchor (N-palmitoyl cysteine) is attached at Cys17. Residue Cys17 is the site of S-diacylglycerol cysteine attachment.

This sequence belongs to the transglycosylase Slt family.

The protein localises to the cell outer membrane. It carries out the reaction Exolytic cleavage of the (1-&gt;4)-beta-glycosidic linkage between N-acetylmuramic acid (MurNAc) and N-acetylglucosamine (GlcNAc) residues in peptidoglycan, from either the reducing or the non-reducing ends of the peptidoglycan chains, with concomitant formation of a 1,6-anhydrobond in the MurNAc residue.. In terms of biological role, murein-degrading enzyme. May play a role in recycling of muropeptides during cell elongation and/or cell division. This chain is Membrane-bound lytic murein transglycosylase C, found in Escherichia fergusonii (strain ATCC 35469 / DSM 13698 / CCUG 18766 / IAM 14443 / JCM 21226 / LMG 7866 / NBRC 102419 / NCTC 12128 / CDC 0568-73).